Reading from the N-terminus, the 428-residue chain is Immunoglobulin superfamily member 11 (428 aa).

The first 22 residues, M1 to S22, serve as a signal peptide directing secretion. In terms of domain architecture, Ig-like V-type spans L23–T136. The Extracellular segment spans residues L23–V240. Cystine bridges form between C44/C120 and C165/C215. The N-linked (GlcNAc...) asparagine glycan is linked to N102. The Ig-like C2-type domain maps to P144–S234. Residues G241–I261 traverse the membrane as a helical segment. The Cytoplasmic segment spans residues S262–V428. Omega-N-methylarginine is present on R375. Residues G376–V389 show a composition bias toward polar residues. The interval G376 to Q396 is disordered.

Post-translationally, N-glycosylated. In terms of tissue distribution, highly expressed in testis and detected in kidney and adrenal gland. In brain, expressed in commissure fibers of the corpus callosum and pyramidal cell layers of the dentate gyrus and hippocampus where it is probably expressed by both neurons and glial cells.

It is found in the cell membrane. Functions as a cell adhesion molecule through homophilic interaction. Stimulates cell growth. The polypeptide is Immunoglobulin superfamily member 11 (Igsf11) (Mus musculus (Mouse)).